The chain runs to 310 residues: Putative integrase/recombinase y4rE (310 aa).

The Core-binding (CB) domain occupies 6–83 (RFLGEKVERY…VLRRFYEYLA (78 aa)). Positions 104–301 (PPPRILSEAE…SVDLLAMAAE (198 aa)) constitute a Tyr recombinase domain. Catalysis depends on residues Arg-148, Lys-173, His-245, Arg-248, and His-279. The active-site O-(3'-phospho-DNA)-tyrosine intermediate is Tyr-288.

Belongs to the 'phage' integrase family.

This is Putative integrase/recombinase y4rE from Sinorhizobium fredii (strain NBRC 101917 / NGR234).